The following is a 281-amino-acid chain: 18S rRNA (guanine-N(7))-methyltransferase (281 aa).

Positions 212-231 (LPKGLTESQDADQASESMFT) are enriched in polar residues. Positions 212-281 (LPKGLTESQD…YTGRKRKPRF (70 aa)) are disordered. The span at 242–256 (RDLVKKSREWVLEKK) shows a compositional bias: basic and acidic residues.

This sequence belongs to the class I-like SAM-binding methyltransferase superfamily. BUD23/WBSCR22 family. In terms of assembly, heterodimer with TRMT112; this heterodimerization is necessary for the metabolic stability and activity of the catalytic subunit BUD23. Interacts with GRIP1. May be ubiquitinated and targeted to degradation in response to pro-inflammatory cytokine signaling.

It localises to the nucleus. It is found in the nucleoplasm. Its subcellular location is the cytoplasm. The protein resides in the perinuclear region. It carries out the reaction a guanosine in 18S rRNA + S-adenosyl-L-methionine = an N(7)-methylguanosine in 18S rRNA + S-adenosyl-L-homocysteine. In terms of biological role, S-adenosyl-L-methionine-dependent methyltransferase that specifically methylates the N(7) position of a guanine in 18S rRNA. Requires the methyltransferase adapter protein TRM112 for full rRNA methyltransferase activity. Involved in the pre-rRNA processing steps leading to small-subunit rRNA production independently of its RNA-modifying catalytic activity. Important for biogenesis end export of the 40S ribosomal subunit independent on its methyltransferase activity. Locus-specific steroid receptor coactivator. Potentiates transactivation by glucocorticoid (NR3C1), mineralocorticoid (NR3C2), androgen (AR) and progesterone (PGR) receptors. Required for the maintenance of open chromatin at the TSC22D3/GILZ locus to facilitate NR3C1 loading on the response elements. Required for maintenance of dimethylation on histone H3 'Lys-79' (H3K79me2), although direct histone methyltransferase activity is not observed in vitro. The protein is 18S rRNA (guanine-N(7))-methyltransferase of Mus musculus (Mouse).